The sequence spans 108 residues: UPF0060 membrane protein YnfA (108 aa).

Residues 1-5 (MLKTT) are Periplasmic-facing. The helical transmembrane segment at 6–26 (LLFFVTALCEIIGCFLPWLWL) threads the bilayer. The Cytoplasmic portion of the chain corresponds to 27–30 (KRGA). A helical transmembrane segment spans residues 31–51 (SVWWLLPAAASLALFVWLLTL). Residues 52–60 (HPAASGRVY) lie on the Periplasmic side of the membrane. The helical transmembrane segment at 61 to 81 (AAYGGVYVCTALLWLRVVDGV) threads the bilayer. Residues 82 to 84 (RLT) lie on the Cytoplasmic side of the membrane. Residues 85-105 (VYDWCGALIALCGMLIIVVGW) form a helical membrane-spanning segment. Topologically, residues 106–108 (GRT) are periplasmic.

Belongs to the UPF0060 family.

It is found in the cell inner membrane. This is UPF0060 membrane protein YnfA from Salmonella agona (strain SL483).